The chain runs to 229 residues: Large ribosomal subunit protein uL1 (229 aa).

Belongs to the universal ribosomal protein uL1 family. In terms of assembly, part of the 50S ribosomal subunit.

Binds directly to 23S rRNA. The L1 stalk is quite mobile in the ribosome, and is involved in E site tRNA release. Functionally, protein L1 is also a translational repressor protein, it controls the translation of the L11 operon by binding to its mRNA. The chain is Large ribosomal subunit protein uL1 from Haemophilus influenzae (strain PittEE).